A 124-amino-acid polypeptide reads, in one-letter code: Small ribosomal subunit protein uS12cz/uS12cy (124 aa).

It belongs to the universal ribosomal protein uS12 family. As to quaternary structure, part of the 30S ribosomal subunit.

The protein resides in the plastid. Its subcellular location is the chloroplast. With S4 and S5 plays an important role in translational accuracy. Located at the interface of the 30S and 50S subunits. The protein is Small ribosomal subunit protein uS12cz/uS12cy (rps12-A) of Zea mays (Maize).